A 365-amino-acid polypeptide reads, in one-letter code: MRVMAPRTLILLLSGALALTETWAGSHSMRYFFTAVAPPGRGEPRFIAVGYVDDTQFVRFDSDAANTRGEPRAPWVEQEGPEYWDRETQKYKRQAQTDRVSLRKLRGYYNQSEDGSHTFQRMYGCDVGPDGRLQRGYDQLAYDGKDYIALNEDLRSWTAADTAAQITQRKWEAARWAERQRAYLEGLCVEWLRRYLENGKETLQRADPPKTHVTHHPISDHEATLRCWALGFYPAEITLTWQRDGEEQTQDIELVETRPAGDGTFQKWAAMVVPSGEEQRYTCHVQHKGLLEPLTLRWEPSSQPTIPIVGIVAGLAVLAVVFTGTVVAAVMCRRKSSGGKGGSCSQAACSNSAQGSDESLIACKA.

The signal sequence occupies residues 1–24; that stretch reads MRVMAPRTLILLLSGALALTETWA. The segment at 25-114 is alpha-1; that stretch reads GSHSMRYFFT…LRGYYNQSED (90 aa). The Extracellular segment spans residues 25-308; sequence GSHSMRYFFT…EPSSQPTIPI (284 aa). An N-linked (GlcNAc...) asparagine glycan is attached at asparagine 110. The segment at 115–206 is alpha-2; it reads GSHTFQRMYG…ENGKETLQRA (92 aa). Intrachain disulfides connect cysteine 125–cysteine 188 and cysteine 227–cysteine 283. Residues 207–298 are alpha-3; the sequence is DPPKTHVTHH…GLLEPLTLRW (92 aa). An Ig-like C1-type domain is found at 209 to 297; it reads PKTHVTHHPI…KGLLEPLTLR (89 aa). Positions 299–308 are connecting peptide; it reads EPSSQPTIPI. A helical transmembrane segment spans residues 309–332; the sequence is VGIVAGLAVLAVVFTGTVVAAVMC. At 333 to 365 the chain is on the cytoplasmic side; sequence RRKSSGGKGGSCSQAACSNSAQGSDESLIACKA. A phosphoserine mark is found at serine 356 and serine 359.

The protein belongs to the MHC class I family. In terms of assembly, heterodimer of an alpha chain and a beta chain (beta-2-microglobulin).

The protein localises to the membrane. Functionally, involved in the presentation of foreign antigens to the immune system. The polypeptide is Class I histocompatibility antigen, Gogo-C*0101/C*0102 alpha chain (Gorilla gorilla gorilla (Western lowland gorilla)).